We begin with the raw amino-acid sequence, 275 residues long: Dihydroxyacetone phosphatase (275 aa).

Asp10 acts as the Nucleophile in catalysis. Mg(2+)-binding residues include Asp10, Asp12, and Asp206. The Proton donor/acceptor role is filled by Asp12.

The protein belongs to the HAD-like hydrolase superfamily. In terms of assembly, homohexamer. It depends on Mg(2+) as a cofactor.

It catalyses the reaction dihydroxyacetone phosphate + H2O = dihydroxyacetone + phosphate. Catalyzes dephosphorylation of dihydroxyacetone phosphate (DHAP) to produce 1,3-dihydroxyacetone (DHA). Is the main enzyme responsible for DHA production from catabolism of sugars (glucose, fructose, and sucrose) in C.glutamicum. Displays no activity toward nucleoside monophosphates (AMP, CMP, GMP, or UMP). The chain is Dihydroxyacetone phosphatase from Corynebacterium glutamicum (strain R).